The following is a 219-amino-acid chain: MSITQEFNLLSNRFRTFYPVVIDIETAGFNPKTDAVLEIALITLKMDKLGWLHKEDILHFHIKPFKGSIINSDAIAFNKIDPFNPLRGAISETLAIESILEKVNYGIKIQGCTRGIVVAHNAHFDHNFLMAAIQRVKIKNNPFHPFVTFDTAALSGLAVGQTVLAKACKAIGLSFDNNQAHSALYDSLQTANLFCKIVNRWKGLGGWPINVKKSKQNSY.

The Exonuclease domain maps to 20–194 (VVIDIETAGF…YDSLQTANLF (175 aa)). Mg(2+) is bound by residues aspartate 23, glutamate 25, histidine 181, and aspartate 186. Residue histidine 181 is the Proton donor/acceptor of the active site.

It belongs to the RNase T family. In terms of assembly, homodimer. Mg(2+) serves as cofactor.

In terms of biological role, trims short 3' overhangs of a variety of RNA species, leaving a one or two nucleotide 3' overhang. Responsible for the end-turnover of tRNA: specifically removes the terminal AMP residue from uncharged tRNA (tRNA-C-C-A). Also appears to be involved in tRNA biosynthesis. This is Ribonuclease T from Buchnera aphidicola subsp. Schizaphis graminum (strain Sg).